We begin with the raw amino-acid sequence, 400 residues long: MSKEKIAIAYSGGLDTSIMIKWLKDKYDAEIVAVTGNLGQQKEIENLESKAIATGASAFQFVDLRKEFVEEYIWKALKAGALYEDVYPLATALGRPLLAKAIVDAALAEGCTMLAHGCTGKGNDQVRFEVTFASLAPHLKVLAPLREWEFTSREAEIAYALEHNIPVSATKKSPYSIDENIWGISIECGVLEDPMVAPPEDAYQITTSPENAPDRPTVVDIEFVQGVPVSLDGKTMSGLELIMKLNETGAANGVGRLDMIENRVVGIKSREIYEAPAATILHFAHRELERLTLEKTVFQYKKNISQDYANIIYNGLWFSPMRHALDAFIEETQKPVTGLVRVKLYKGSLSLLGRTSPNSLYNEELATYTEADTFNHKAAAGFIHLYGLGLKTFSEVNPAR.

9–17 (AYSGGLDTS) contributes to the ATP binding site. Tyr-87 is an L-citrulline binding site. Position 117 (Gly-117) interacts with ATP. L-aspartate contacts are provided by Thr-119, Asn-123, and Asp-124. An L-citrulline-binding site is contributed by Asn-123. Positions 127, 176, 185, 261, and 273 each coordinate L-citrulline.

This sequence belongs to the argininosuccinate synthase family. Type 1 subfamily. Homotetramer.

Its subcellular location is the cytoplasm. The enzyme catalyses L-citrulline + L-aspartate + ATP = 2-(N(omega)-L-arginino)succinate + AMP + diphosphate + H(+). It functions in the pathway amino-acid biosynthesis; L-arginine biosynthesis; L-arginine from L-ornithine and carbamoyl phosphate: step 2/3. This Chlorobium phaeobacteroides (strain DSM 266 / SMG 266 / 2430) protein is Argininosuccinate synthase.